A 130-amino-acid chain; its full sequence is Small ribosomal subunit protein uS11 (130 aa).

The protein belongs to the universal ribosomal protein uS11 family. As to quaternary structure, part of the 30S ribosomal subunit. Interacts with proteins S7 and S18. Binds to IF-3.

Its function is as follows. Located on the platform of the 30S subunit, it bridges several disparate RNA helices of the 16S rRNA. Forms part of the Shine-Dalgarno cleft in the 70S ribosome. This Buchnera aphidicola subsp. Cinara cedri (strain Cc) protein is Small ribosomal subunit protein uS11.